The chain runs to 95 residues: Putative RelE-like toxin protein (95 aa).

The protein belongs to the RelE toxin family.

In terms of biological role, toxic component of a type II toxin-antitoxin (TA) system. This chain is Putative RelE-like toxin protein, found in Escherichia coli.